The primary structure comprises 279 residues: Acyl-[acyl-carrier-protein]--UDP-N-acetylglucosamine O-acyltransferase (279 aa).

It belongs to the transferase hexapeptide repeat family. LpxA subfamily. In terms of assembly, homotrimer.

Its subcellular location is the cytoplasm. It carries out the reaction a (3R)-hydroxyacyl-[ACP] + UDP-N-acetyl-alpha-D-glucosamine = a UDP-3-O-[(3R)-3-hydroxyacyl]-N-acetyl-alpha-D-glucosamine + holo-[ACP]. The protein operates within glycolipid biosynthesis; lipid IV(A) biosynthesis; lipid IV(A) from (3R)-3-hydroxytetradecanoyl-[acyl-carrier-protein] and UDP-N-acetyl-alpha-D-glucosamine: step 1/6. Involved in the biosynthesis of lipid A, a phosphorylated glycolipid that anchors the lipopolysaccharide to the outer membrane of the cell. The chain is Acyl-[acyl-carrier-protein]--UDP-N-acetylglucosamine O-acyltransferase from Mesorhizobium japonicum (strain LMG 29417 / CECT 9101 / MAFF 303099) (Mesorhizobium loti (strain MAFF 303099)).